The primary structure comprises 46 residues: L-amino-acid oxidase (46 aa).

N-linked (GlcNAc...) asparagine glycosylation occurs at Asn31.

It belongs to the flavin monoamine oxidase family. FIG1 subfamily. Requires FAD as cofactor.

Its subcellular location is the secreted. The protein localises to the lysosome. It localises to the cytoplasmic vesicle. The protein resides in the secretory vesicle. It is found in the acrosome. It carries out the reaction an L-alpha-amino acid + O2 + H2O = a 2-oxocarboxylate + H2O2 + NH4(+). It catalyses the reaction L-tryptophan + O2 + H2O = indole-3-pyruvate + H2O2 + NH4(+). The enzyme catalyses L-phenylalanine + O2 + H2O = 3-phenylpyruvate + H2O2 + NH4(+). The catalysed reaction is L-tyrosine + O2 + H2O = 3-(4-hydroxyphenyl)pyruvate + H2O2 + NH4(+). It carries out the reaction L-arginine + O2 + H2O = 5-guanidino-2-oxopentanoate + H2O2 + NH4(+). It functions in the pathway amino-acid degradation; L-tryptophan degradation via pyruvate pathway. In terms of biological role, secreted L-amino-acid oxidase that acts as a key immunoregulator. Has preference for L-aromatic amino acids: converts phenylalanine (Phe), tyrosine (Tyr) and tryptophan (Trp) to phenylpyruvic acid (PP), hydroxyphenylpyruvic acid (HPP), and indole-3-pyruvic acid (I3P), respectively. Also has weak L-arginine oxidase activity. Acts as a negative regulator of anti-tumor immunity by mediating Trp degradation via an indole pyruvate pathway that activates the transcription factor AHR. IL4I1-mediated Trp catabolism generates I3P, giving rise to indole metabolites (indole-3-acetic acid (IAA) and indole-3-aldehyde (I3A)) and kynurenic acid, which act as ligands for AHR, a ligand-activated transcription factor that plays important roles in immunity and cancer. AHR activation by indoles following IL4I1-mediated Trp degradation enhances tumor progression by promoting cancer cell motility and suppressing adaptive immunity. Also has an immunoregulatory function in some immune cells, probably by mediating Trp degradation and promoting downstream AHR activation: inhibits T-cell activation and proliferation, promotes the differentiation of naive CD4(+) T-cells into FOXP3(+) regulatory T-cells (Treg) and regulates the development and function of B-cells. Also regulates M2 macrophage polarization by inhibiting T-cell activation. Also has antibacterial properties by inhibiting growth of Gram negative and Gram positive bacteria through the production of NH4(+) and H2O2. This chain is L-amino-acid oxidase, found in Mus spretus (Western Mediterranean mouse).